We begin with the raw amino-acid sequence, 373 residues long: tRNA-specific 2-thiouridylase MnmA (373 aa).

Residues glycine 12 to serine 19 and methionine 38 each bind ATP. The interval asparagine 98–aspartate 100 is interaction with target base in tRNA. Cysteine 103 serves as the catalytic Nucleophile. Cysteine 103 and cysteine 200 are joined by a disulfide. Glycine 127 serves as a coordination point for ATP. The interval lysine 150 to glutamine 152 is interaction with tRNA. Cysteine 200 functions as the Cysteine persulfide intermediate in the catalytic mechanism. The interval arginine 312 to tyrosine 313 is interaction with tRNA.

The protein belongs to the MnmA/TRMU family.

The protein resides in the cytoplasm. It carries out the reaction S-sulfanyl-L-cysteinyl-[protein] + uridine(34) in tRNA + AH2 + ATP = 2-thiouridine(34) in tRNA + L-cysteinyl-[protein] + A + AMP + diphosphate + H(+). Catalyzes the 2-thiolation of uridine at the wobble position (U34) of tRNA, leading to the formation of s(2)U34. This Streptococcus thermophilus (strain ATCC BAA-491 / LMD-9) protein is tRNA-specific 2-thiouridylase MnmA.